A 148-amino-acid polypeptide reads, in one-letter code: Large ribosomal subunit protein uL13 (148 aa).

Composition is skewed to basic and acidic residues over residues 71 to 81 (GKKEKQKEYHE) and 89 to 99 (DHSHSPEEMRA). Disordered regions lie at residues 71–99 (GKKE…EMRA) and 125–148 (KKLK…LDNA).

This sequence belongs to the universal ribosomal protein uL13 family. Part of the 50S ribosomal subunit.

In terms of biological role, this protein is one of the early assembly proteins of the 50S ribosomal subunit, although it is not seen to bind rRNA by itself. It is important during the early stages of 50S assembly. This is Large ribosomal subunit protein uL13 from Salinibacter ruber (strain DSM 13855 / M31).